Consider the following 270-residue polypeptide: Undecaprenyl-diphosphatase 1 (270 aa).

7 consecutive transmembrane segments (helical) span residues 5-25 (YYILKYLILGLFQGLTEPIPI), 42-62 (IEGFSFELLVNSASLLAVLLI), 89-109 (FFFIIYLVIATIPAGVIGVLF), 117-137 (LKGVKMVGISLLITAVGLWII), 192-212 (FSFLLYIPVSLGGLLLSITDI), 220-240 (TLFVPYIVAFIATFIMTYISL), and 250-270 (GNLKYFSFYCIIVGVLTLIFL).

Belongs to the UppP family.

The protein localises to the cell membrane. The enzyme catalyses di-trans,octa-cis-undecaprenyl diphosphate + H2O = di-trans,octa-cis-undecaprenyl phosphate + phosphate + H(+). In terms of biological role, catalyzes the dephosphorylation of undecaprenyl diphosphate (UPP). Confers resistance to bacitracin. This is Undecaprenyl-diphosphatase 1 from Bacillus cereus (strain ATCC 10987 / NRS 248).